Here is a 98-residue protein sequence, read N- to C-terminus: NADH-ubiquinone oxidoreductase chain 4L (98 aa).

Transmembrane regions (helical) follow at residues 1–21 (MTPTYMNIMLAFTISLLGMLT), 29–49 (SLLCLEGMMMSLFIMTTLIAL), and 61–81 (IILLVFAACEAAVGLALLVSI).

This sequence belongs to the complex I subunit 4L family. As to quaternary structure, core subunit of respiratory chain NADH dehydrogenase (Complex I) which is composed of 45 different subunits.

The protein localises to the mitochondrion inner membrane. The enzyme catalyses a ubiquinone + NADH + 5 H(+)(in) = a ubiquinol + NAD(+) + 4 H(+)(out). In terms of biological role, core subunit of the mitochondrial membrane respiratory chain NADH dehydrogenase (Complex I) which catalyzes electron transfer from NADH through the respiratory chain, using ubiquinone as an electron acceptor. Part of the enzyme membrane arm which is embedded in the lipid bilayer and involved in proton translocation. The sequence is that of NADH-ubiquinone oxidoreductase chain 4L (MT-ND4L) from Macaca pagensis (Mentawai macaque).